We begin with the raw amino-acid sequence, 115 residues long: Small polypeptide DEVIL 13 (115 aa).

Residues 1-12 show a composition bias toward basic and acidic residues; the sequence is MEEKWKLSKKDT. Positions 1–89 are disordered; the sequence is MEEKWKLSKK…SITQKYSSLA (89 aa). The segment covering 13 to 65 has biased composition (low complexity); that stretch reads TASSSSSKSKFSRSFSTSASSTKSPIFVRSSSTKCSVPSSSSSSSSSSSISRS. A helical membrane pass occupies residues 44–63; that stretch reads STKCSVPSSSSSSSSSSSIS. The required for DVL/RTFL small polypeptide activity stretch occupies residues 80–111; that stretch reads SITQKYSSLAKEQKARFYIMRRCVAMLVCWHK.

Belongs to the DVL/RTFL small polypeptides family.

The protein resides in the cell membrane. Small polypeptide acting as a regulatory molecule which coordinates cellular responses required for differentiation, growth and development, probably by restricting polar cell proliferation in lateral organs and coordinating socket cell recruitment and differentiation at trichome sites. The protein is Small polypeptide DEVIL 13 of Arabidopsis thaliana (Mouse-ear cress).